The sequence spans 660 residues: Acetyl-coenzyme A synthetase (660 aa).

CoA-binding positions include 197–200 and T317; that span reads RGGK. Residues 397-399, 421-426, D512, and R528 contribute to the ATP site; these read GEP and DTFWQT. Residue S536 coordinates CoA. R539 is an ATP binding site. Mg(2+) contacts are provided by V550 and V555. K625 carries the post-translational modification N6-acetyllysine.

It belongs to the ATP-dependent AMP-binding enzyme family. Requires Mg(2+) as cofactor. Post-translationally, acetylated. Deacetylation by the SIR2-homolog deacetylase activates the enzyme.

The catalysed reaction is acetate + ATP + CoA = acetyl-CoA + AMP + diphosphate. Functionally, catalyzes the conversion of acetate into acetyl-CoA (AcCoA), an essential intermediate at the junction of anabolic and catabolic pathways. AcsA undergoes a two-step reaction. In the first half reaction, AcsA combines acetate with ATP to form acetyl-adenylate (AcAMP) intermediate. In the second half reaction, it can then transfer the acetyl group from AcAMP to the sulfhydryl group of CoA, forming the product AcCoA. The sequence is that of Acetyl-coenzyme A synthetase from Ralstonia pickettii (strain 12J).